Here is a 345-residue protein sequence, read N- to C-terminus: NADH-ubiquinone oxidoreductase chain 2 (345 aa).

Helical transmembrane passes span 25–45, 60–80, 99–119, 149–171, 178–198, 199–219, 242–262, 282–302, and 324–344; these read HWLL…PLMT, FLTQ…NAWL, TIAI…PEVL, LNTP…GGLN, ILAF…PFSP, QLMI…FLVL, ALSL…GFVP, LALS…IVTL, and LLLS…PLTL.

The protein belongs to the complex I subunit 2 family. Core subunit of respiratory chain NADH dehydrogenase (Complex I) which is composed of 45 different subunits.

The protein localises to the mitochondrion inner membrane. It catalyses the reaction a ubiquinone + NADH + 5 H(+)(in) = a ubiquinol + NAD(+) + 4 H(+)(out). Core subunit of the mitochondrial membrane respiratory chain NADH dehydrogenase (Complex I) which catalyzes electron transfer from NADH through the respiratory chain, using ubiquinone as an electron acceptor. Essential for the catalytic activity and assembly of complex I. In Xenopus laevis (African clawed frog), this protein is NADH-ubiquinone oxidoreductase chain 2 (mt-nd2).